Consider the following 165-residue polypeptide: Endoribonuclease YbeY (165 aa).

Residues His-130, His-134, and His-140 each contribute to the Zn(2+) site.

The protein belongs to the endoribonuclease YbeY family. Zn(2+) serves as cofactor.

It localises to the cytoplasm. Functionally, single strand-specific metallo-endoribonuclease involved in late-stage 70S ribosome quality control and in maturation of the 3' terminus of the 16S rRNA. In Streptococcus suis (strain 98HAH33), this protein is Endoribonuclease YbeY.